The primary structure comprises 623 residues: EIN3-binding F-box protein 2 (623 aa).

An F-box domain is found at 52-106 (QTSIDVLPEECLFEILRRLPSGQERSACACVSKHWLNLLSSISRSEVNESSVQDV). LRR repeat units lie at residues 119–147 (GKKA…QIRG), 151–176 (ESKV…SLWN), 177–202 (LPAV…DLSR), 203–228 (CPGI…TIDS), 229–254 (CSGV…SIRS), 255–281 (CPRI…KLQM), 307–334 (LQGV…SVMS), 335–360 (CRGM…SLNK), 361–386 (CLLV…KLEE), 387–413 (CHRI…SLAN), 414–441 (CLGI…SIRC), 442–467 (CPGF…ELCG), 468–494 (LNGV…NLSE), 495–521 (CINV…NLDG), 522–547 (CKNI…DISN), 548–574 (TLVS…SIGG), 575–600 (CSSI…NIQR), and 601–623 (CGRI…DILY).

In terms of assembly, part of a SCF (SKP1-cullin-F-box) protein ligase complex. Interacts with CUL1, SKP1A/ASK1, SKP1B/ASK2, EIN3, and EIL1. As to expression, ubiquitous.

The protein localises to the nucleus. It functions in the pathway protein modification; protein ubiquitination. Component of SCF(EBF1) E3 ubiquitin ligase complexes, which may mediate the ubiquitination and subsequent proteasomal degradation of target proteins (probably including EIN3 and EIL1). Regulator of the ethylene signaling cascade by modulating the stability of EIN3 and EIL1 proteins. The chain is EIN3-binding F-box protein 2 (EBF2) from Arabidopsis thaliana (Mouse-ear cress).